The sequence spans 460 residues: 3-isopropylmalate dehydratase large subunit (460 aa).

[4Fe-4S] cluster is bound by residues cysteine 338, cysteine 398, and cysteine 401.

This sequence belongs to the aconitase/IPM isomerase family. LeuC type 1 subfamily. As to quaternary structure, heterodimer of LeuC and LeuD. It depends on [4Fe-4S] cluster as a cofactor.

It catalyses the reaction (2R,3S)-3-isopropylmalate = (2S)-2-isopropylmalate. It participates in amino-acid biosynthesis; L-leucine biosynthesis; L-leucine from 3-methyl-2-oxobutanoate: step 2/4. Catalyzes the isomerization between 2-isopropylmalate and 3-isopropylmalate, via the formation of 2-isopropylmaleate. In Streptococcus gordonii (strain Challis / ATCC 35105 / BCRC 15272 / CH1 / DL1 / V288), this protein is 3-isopropylmalate dehydratase large subunit.